Here is a 312-residue protein sequence, read N- to C-terminus: uncharacterized protein (312 aa).

112-118 is a binding site for ATP; the sequence is LIGLPMV.

The protein belongs to the MurCDEF family.

This is an uncharacterized protein from Methanothermobacter thermautotrophicus (strain ATCC 29096 / DSM 1053 / JCM 10044 / NBRC 100330 / Delta H) (Methanobacterium thermoautotrophicum).